A 144-amino-acid polypeptide reads, in one-letter code: C-type isolectin Sp-CL4 (144 aa).

Residues 27-144 (DENRKVKYFE…CSEKLPFMCA (118 aa)) form the C-type lectin domain. Cystine bridges form between C48-C143 and C119-C135.

Belongs to the true venom lectin family. Glycosylated with a carbohydrate of 383 Da. Expressed by the venom gland.

The protein resides in the secreted. Functionally, the role of this hemagglutinin in the venom is unknown, because it is masked by the high venom hemolytic activity. Lectin with specificity to galactose. Induces hemagglutination. The sequence is that of C-type isolectin Sp-CL4 from Scorpaena plumieri (Spotted scorpionfish).